We begin with the raw amino-acid sequence, 116 residues long: NADH-ubiquinone oxidoreductase chain 3 (116 aa).

3 consecutive transmembrane segments (helical) span residues 3–23 (LITT…TISF), 56–76 (FFLI…LLPL), and 85–105 (PALT…GLIY).

The protein belongs to the complex I subunit 3 family.

It is found in the mitochondrion membrane. The catalysed reaction is a ubiquinone + NADH + 5 H(+)(in) = a ubiquinol + NAD(+) + 4 H(+)(out). Its function is as follows. Core subunit of the mitochondrial membrane respiratory chain NADH dehydrogenase (Complex I) that is believed to belong to the minimal assembly required for catalysis. Complex I functions in the transfer of electrons from NADH to the respiratory chain. The immediate electron acceptor for the enzyme is believed to be ubiquinone. The sequence is that of NADH-ubiquinone oxidoreductase chain 3 (MT-ND3) from Oncorhynchus masou (Cherry salmon).